Here is a 3390-residue protein sequence, read N- to C-terminus: Genome polyprotein (3390 aa).

Residues 1-15 (MNNQRKKTGKPSINM) form an interaction with host EXOC1 region. Residues 1 to 100 (MNNQRKKTGK…MLSIINKRKK (100 aa)) are Cytoplasmic-facing. Positions 37–72 (LLNGQGPMKLVMAFIAFLRFLAIPPTAGVLARWGTF) are hydrophobic; homodimerization of capsid protein C. Positions 101-114 (TSLCLMMMLPATLA) are cleaved as a propeptide — ER anchor for the capsid protein C, removed in mature form by serine protease NS3. Residues 101 to 118 (TSLCLMMMLPATLAFHLT) traverse the membrane as a helical segment. The Extracellular segment spans residues 119–243 (SRDGEPRMIV…VEKVETWALR (125 aa)). Asparagine 183 carries N-linked (GlcNAc...) asparagine; by host glycosylation. The helical transmembrane segment at 244-264 (HPGFTILALFLAHYIGTSLTQ) threads the bilayer. Position 265 (lysine 265) is a topological domain, cytoplasmic. Residues 266 to 280 (VVIFILLMLVTPSMT) form a helical membrane-spanning segment. Topologically, residues 281-723 (MRCVGVGNRD…VHQIFGSAYT (443 aa)) are extracellular. 4 cysteine pairs are disulfide-bonded: cysteine 283–cysteine 310, cysteine 340–cysteine 401, cysteine 354–cysteine 385, and cysteine 372–cysteine 396. Asparagine 347 carries an N-linked (GlcNAc...) asparagine; by host glycan. Residues 378 to 391 (DRGWGNGCGLFGKG) are fusion peptide. Asparagine 433 carries an N-linked (GlcNAc...) asparagine; by host glycan. 2 disulfides stabilise this stretch: cysteine 463/cysteine 563 and cysteine 580/cysteine 611. The chain crosses the membrane as a helical span at residues 724–744 (ALFSGVSWIMKIGIGVLLTWI). The Cytoplasmic segment spans residues 745–750 (GLNSKN). A helical transmembrane segment spans residues 751–771 (TSMSFSCIAIGIITLYLGVVV). At 772–1193 (QADMGCVINW…MIGSNASDRM (422 aa)) the chain is on the extracellular side. 6 disulfide bridges follow: cysteine 777–cysteine 788, cysteine 828–cysteine 916, cysteine 952–cysteine 996, cysteine 1053–cysteine 1102, cysteine 1064–cysteine 1086, and cysteine 1085–cysteine 1089. N-linked (GlcNAc...) asparagine; by host glycosylation is found at asparagine 903 and asparagine 980. N-linked (GlcNAc...) asparagine; by host glycosylation is found at asparagine 1132 and asparagine 1188. The chain crosses the membrane as a helical span at residues 1194–1218 (GMGVTYLALIATFKIQPFLALGFFL). Residues 1219 to 1224 (RKLTSR) are Cytoplasmic-facing. Residues 1225–1243 (ENLLLGVGLAMAATLRLPE) traverse the membrane as a helical segment. The Lumenal segment spans residues 1244–1267 (DIEQMANGIALGLMALKLITQFET). The chain crosses the membrane as a helical span at residues 1268–1288 (YQLWTALVSLTCSNTIFTLTV). Position 1289 (alanine 1289) is a topological domain, cytoplasmic. A helical membrane pass occupies residues 1290 to 1308 (WRTATLILAGISLLPVCQS). Residues 1309 to 1315 (SSMRKTD) lie on the Lumenal side of the membrane. A helical transmembrane segment spans residues 1316–1336 (WLPMTVAAMGVPPLPLFIFSL). Topologically, residues 1337–1344 (KDTLKRRS) are cytoplasmic. The chain crosses the membrane as a helical span at residues 1345–1365 (WPLNEGVMAVGLVSILASSLL). Residues 1366–1368 (RND) lie on the Lumenal side of the membrane. A helical transmembrane segment spans residues 1369 to 1389 (VPMAGPLVAGGLLIACYVITG). Residues 1390-1443 (TSADLTVEKAADVTWEEEAEQTGVSHNLMITVDDDGTMRIKDDETENILTVLLK) are Cytoplasmic-facing. The tract at residues 1396–1435 (VEKAADVTWEEEAEQTGVSHNLMITVDDDGTMRIKDDETE) is interacts with and activates NS3 protease. Residues 1444–1464 (TALLIVSGIFPYSIPATMLVW) constitute an intramembrane region (helical). Over 1465 to 2146 (HTWQKQTQRS…VEELPETMET (682 aa)) the chain is Cytoplasmic. Residues 1474 to 1651 (SGVLWDVPSP…NAEPDGPTPE (178 aa)) form the Peptidase S7 domain. Catalysis depends on charge relay system; for serine protease NS3 activity residues histidine 1524, aspartate 1548, and serine 1608. In terms of domain architecture, Helicase ATP-binding spans 1654-1810 (EEMFKKRNLT…QSNAPIQDEE (157 aa)). The segment at 1658 to 1661 (KKRN) is important for RNA-binding. Residue 1667–1674 (LHPGSGKT) coordinates ATP. The DEAH box motif lies at 1758–1761 (DEAH). The Helicase C-terminal domain maps to 1821–1986 (GNEWITDFVG…GIIPALFEPE (166 aa)). At lysine 1862 the chain carries N6-acetyllysine; by host. Residues 2147-2167 (LLLLGLMILLTGGAMLFLISG) traverse the membrane as a helical segment. Residues 2168-2169 (KG) are Lumenal-facing. Residues 2170–2190 (IGKTSIGLICVIASSGMLWMA) constitute an intramembrane region (helical). Residue aspartate 2191 is a topological domain, lumenal. Residues 2192 to 2212 (VPLQWIASAIVLEFFMMVLLI) traverse the membrane as a helical segment. Residues 2213-2227 (PEPEKQRTPQDNQLA) are Cytoplasmic-facing. A helical transmembrane segment spans residues 2228–2248 (YVVIGILTLAAIVAANEMGLL). The Lumenal segment spans residues 2249–2273 (ETTKRDLGMSKEPGVVSPTSYLDVD). The segment at residues 2274 to 2294 (LHPASAWTLYAVATTVITPML) is an intramembrane region (helical). At 2295-2305 (RHTIENSTANV) the chain is on the lumenal side. N-linked (GlcNAc...) asparagine; by host glycosylation is found at asparagine 2300 and asparagine 2304. Residues 2306–2326 (SLAAIANQAVVLMGLDKGWPI) constitute an intramembrane region (helical). Residues 2327–2346 (SKMDLGVPLLALGCYSQVNP) are Lumenal-facing. Residues 2347–2367 (LTLIAAVLLLVTHYAIIGPGL) form a helical membrane-spanning segment. Topologically, residues 2368–2412 (QAKATREAQKRTAAGIMKNPTVDGIMTIDLDPVIYDSKFEKQLGQ) are cytoplasmic. The helical transmembrane segment at 2413–2433 (VMLLVLCAVQLLLMRTSWALC) threads the bilayer. At 2434–2458 (EVLTLATGPITTLWEGSPGKFWNTT) the chain is on the lumenal side. Residue asparagine 2456 is glycosylated (N-linked (GlcNAc...) asparagine; by host). A helical transmembrane segment spans residues 2459 to 2479 (IAVSMANIFRGSYLAGAGLAL). Residues 2480-3390 (SIMKSVGTGK…KEEESEGAIW (911 aa)) are Cytoplasmic-facing. The mRNA cap 0-1 NS5-type MT domain occupies 2492–2753 (TGSQGETLGE…DVDLGAGTRH (262 aa)). Serine 2546 lines the S-adenosyl-L-methionine pocket. Serine 2546 carries the post-translational modification Phosphoserine. The active-site For 2'-O-MTase activity is the lysine 2551. An SUMO-interacting motif motif is present at residues 2567–2570 (VIDL). Positions 2576, 2577, 2594, 2595, 2621, and 2622 each coordinate S-adenosyl-L-methionine. Aspartate 2636 serves as the catalytic For 2'-O-MTase activity. Isoleucine 2637 contacts S-adenosyl-L-methionine. Active-site for 2'-O-MTase activity residues include lysine 2670 and glutamate 2706. Tyrosine 2708 provides a ligand contact to S-adenosyl-L-methionine. Positions 2927, 2931, 2936, and 2939 each coordinate Zn(2+). The region spanning 3018–3168 (AMYADDTAGW…PIDDRFANAL (151 aa)) is the RdRp catalytic domain. Histidine 3202, cysteine 3218, and cysteine 3337 together coordinate Zn(2+).

In the N-terminal section; belongs to the class I-like SAM-binding methyltransferase superfamily. mRNA cap 0-1 NS5-type methyltransferase family. In terms of assembly, homodimer. Interacts (via N-terminus) with host EXOC1 (via C-terminus); this interaction results in EXOC1 degradation through the proteasome degradation pathway. As to quaternary structure, forms heterodimers with envelope protein E in the endoplasmic reticulum and Golgi. Homodimer; in the endoplasmic reticulum and Golgi. Interacts with protein prM. Interacts with non-structural protein 1. In terms of assembly, homodimer; Homohexamer when secreted. Interacts with envelope protein E. As to quaternary structure, interacts (via N-terminus) with serine protease NS3. Forms a heterodimer with serine protease NS3. May form homooligomers. In terms of assembly, forms a heterodimer with NS2B. Interacts with NS4B. Interacts with unphosphorylated RNA-directed RNA polymerase NS5; this interaction stimulates RNA-directed RNA polymerase NS5 guanylyltransferase activity. Interacts with host SHFL. As to quaternary structure, interacts with host MAVS; this interaction inhibits the synthesis of IFN-beta. Interacts with host SHFL. Interacts with host AUP1; the interaction occurs in the presence of Dengue virus NS4B and induces lipophagy which facilitates production of virus progeny particles. Interacts with serine protease NS3. In terms of assembly, homodimer. Interacts with host STAT2; this interaction inhibits the phosphorylation of the latter, and, when all viral proteins are present (polyprotein), targets STAT2 for degradation. Interacts with serine protease NS3. Post-translationally, specific enzymatic cleavages in vivo yield mature proteins. Cleavages in the lumen of endoplasmic reticulum are performed by host signal peptidase, whereas cleavages in the cytoplasmic side are performed by serine protease NS3. Signal cleavage at the 2K-4B site requires a prior NS3 protease-mediated cleavage at the 4A-2K site. Cleaved in post-Golgi vesicles by a host furin, releasing the mature small envelope protein M, and peptide pr. This cleavage is incomplete as up to 30% of viral particles still carry uncleaved prM. In terms of processing, N-glycosylated. Post-translationally, N-glycosylated. The excreted form is glycosylated and this is required for efficient secretion of the protein from infected cells. Acetylated by host KAT5. Acetylation modulates NS3 RNA-binding and unwinding activities and plays an important positive role for viral replication. In terms of processing, sumoylation of RNA-directed RNA polymerase NS5 increases NS5 protein stability allowing proper viral RNA replication. Post-translationally, phosphorylated on serines residues. This phosphorylation may trigger NS5 nuclear localization.

Its subcellular location is the virion. It localises to the host nucleus. It is found in the host cytoplasm. The protein resides in the host perinuclear region. The protein localises to the secreted. Its subcellular location is the virion membrane. It localises to the host endoplasmic reticulum membrane. It is found in the host mitochondrion. It catalyses the reaction Selective hydrolysis of -Xaa-Xaa-|-Yaa- bonds in which each of the Xaa can be either Arg or Lys and Yaa can be either Ser or Ala.. It carries out the reaction RNA(n) + a ribonucleoside 5'-triphosphate = RNA(n+1) + diphosphate. The enzyme catalyses a ribonucleoside 5'-triphosphate + H2O = a ribonucleoside 5'-diphosphate + phosphate + H(+). The catalysed reaction is ATP + H2O = ADP + phosphate + H(+). It catalyses the reaction a 5'-end (5'-triphosphoguanosine)-ribonucleoside in mRNA + S-adenosyl-L-methionine = a 5'-end (N(7)-methyl 5'-triphosphoguanosine)-ribonucleoside in mRNA + S-adenosyl-L-homocysteine. It carries out the reaction a 5'-end (N(7)-methyl 5'-triphosphoguanosine)-ribonucleoside in mRNA + S-adenosyl-L-methionine = a 5'-end (N(7)-methyl 5'-triphosphoguanosine)-(2'-O-methyl-ribonucleoside) in mRNA + S-adenosyl-L-homocysteine + H(+). In terms of biological role, plays a role in virus budding by binding to the cell membrane and gathering the viral RNA into a nucleocapsid that forms the core of a mature virus particle. During virus entry, may induce genome penetration into the host cytoplasm after hemifusion induced by the surface proteins. Can migrate to the cell nucleus where it modulates host functions. Overcomes the anti-viral effects of host EXOC1 by sequestering and degrading the latter through the proteasome degradation pathway. Functionally, inhibits RNA silencing by interfering with host Dicer. Prevents premature fusion activity of envelope proteins in trans-Golgi by binding to envelope protein E at pH6.0. After virion release in extracellular space, gets dissociated from E dimers. Its function is as follows. Acts as a chaperone for envelope protein E during intracellular virion assembly by masking and inactivating envelope protein E fusion peptide. prM is the only viral peptide matured by host furin in the trans-Golgi network probably to avoid catastrophic activation of the viral fusion activity in acidic Golgi compartment prior to virion release. prM-E cleavage is inefficient, and many virions are only partially matured. These uncleaved prM would play a role in immune evasion. In terms of biological role, may play a role in virus budding. Exerts cytotoxic effects by activating a mitochondrial apoptotic pathway through M ectodomain. May display a viroporin activity. Functionally, binds to host cell surface receptor and mediates fusion between viral and cellular membranes. Envelope protein is synthesized in the endoplasmic reticulum in the form of heterodimer with protein prM. They play a role in virion budding in the ER, and the newly formed immature particle is covered with 60 spikes composed of heterodimer between precursor prM and envelope protein E. The virion is transported to the Golgi apparatus where the low pH causes dissociation of PrM-E heterodimers and formation of E homodimers. prM-E cleavage is inefficient, and many virions are only partially matured. These uncleaved prM would play a role in immune evasion. Involved in immune evasion, pathogenesis and viral replication. Once cleaved off the polyprotein, is targeted to three destinations: the viral replication cycle, the plasma membrane and the extracellular compartment. Essential for viral replication. Required for formation of the replication complex and recruitment of other non-structural proteins to the ER-derived membrane structures. Excreted as a hexameric lipoparticle that plays a role against host immune response. Antagonizing the complement function. Binds to the host macrophages and dendritic cells. Inhibits signal transduction originating from Toll-like receptor 3 (TLR3). Its function is as follows. Disrupts the host endothelial glycocalyx layer of host pulmonary microvascular endothelial cells, inducing degradation of sialic acid and shedding of heparan sulfate proteoglycans. NS1 induces expression of sialidases, heparanase, and activates cathepsin L, which activates heparanase via enzymatic cleavage. These effects are probably linked to the endothelial hyperpermeability observed in severe dengue disease. In terms of biological role, component of the viral RNA replication complex that functions in virion assembly and antagonizes the host immune response. Functionally, required cofactor for the serine protease function of NS3. May have membrane-destabilizing activity and form viroporins. Displays three enzymatic activities: serine protease, NTPase and RNA helicase. NS3 serine protease, in association with NS2B, performs its autocleavage and cleaves the polyprotein at dibasic sites in the cytoplasm: C-prM, NS2A-NS2B, NS2B-NS3, NS3-NS4A, NS4A-2K and NS4B-NS5. NS3 RNA helicase binds RNA and unwinds dsRNA in the 3' to 5' direction. Its function is as follows. Regulates the ATPase activity of the NS3 helicase activity. NS4A allows NS3 helicase to conserve energy during unwinding. Plays a role in the inhibition of the host innate immune response. Interacts with host MAVS and thereby prevents the interaction between RIGI and MAVS. In turn, IFN-beta production is impaired. Interacts with host AUP1 which mediates induction of lipophagy in host cells and facilitates production of virus progeny particles. In terms of biological role, functions as a signal peptide for NS4B and is required for the interferon antagonism activity of the latter. Functionally, induces the formation of ER-derived membrane vesicles where the viral replication takes place. Inhibits interferon (IFN)-induced host STAT1 phosphorylation and nuclear translocation, thereby preventing the establishment of cellular antiviral state by blocking the IFN-alpha/beta pathway. Replicates the viral (+) and (-) RNA genome, and performs the capping of genomes in the cytoplasm. NS5 methylates viral RNA cap at guanine N-7 and ribose 2'-O positions. Besides its role in RNA genome replication, also prevents the establishment of cellular antiviral state by blocking the interferon-alpha/beta (IFN-alpha/beta) signaling pathway. Inhibits host TYK2 and STAT2 phosphorylation, thereby preventing activation of JAK-STAT signaling pathway. The chain is Genome polyprotein from Dengue virus type 3 (strain Philippines/H87/1956) (DENV-3).